A 206-amino-acid chain; its full sequence is Large ribosomal subunit protein uL4 (206 aa).

Residues 63–97 (MYKQKGTGRARHHSARAPQFRGGGKAHGPVVRSHE) are disordered. The span at 64 to 77 (YKQKGTGRARHHSA) shows a compositional bias: basic residues.

It belongs to the universal ribosomal protein uL4 family. As to quaternary structure, part of the 50S ribosomal subunit.

Its function is as follows. One of the primary rRNA binding proteins, this protein initially binds near the 5'-end of the 23S rRNA. It is important during the early stages of 50S assembly. It makes multiple contacts with different domains of the 23S rRNA in the assembled 50S subunit and ribosome. Functionally, forms part of the polypeptide exit tunnel. This chain is Large ribosomal subunit protein uL4, found in Rhizobium johnstonii (strain DSM 114642 / LMG 32736 / 3841) (Rhizobium leguminosarum bv. viciae).